The chain runs to 343 residues: Phosphate acyltransferase (343 aa).

The protein belongs to the PlsX family. Homodimer. Probably interacts with PlsY.

The protein localises to the cytoplasm. The catalysed reaction is a fatty acyl-[ACP] + phosphate = an acyl phosphate + holo-[ACP]. Its pathway is lipid metabolism; phospholipid metabolism. Functionally, catalyzes the reversible formation of acyl-phosphate (acyl-PO(4)) from acyl-[acyl-carrier-protein] (acyl-ACP). This enzyme utilizes acyl-ACP as fatty acyl donor, but not acyl-CoA. The chain is Phosphate acyltransferase from Coxiella burnetii (strain CbuG_Q212) (Coxiella burnetii (strain Q212)).